Consider the following 655-residue polypeptide: Tumor necrosis factor receptor superfamily member 21 (655 aa).

Positions 1–41 are cleaved as a signal peptide; the sequence is MGTSASSITALASCSRIAGQVGATMVAGSLLLLGFLSTITA. Topologically, residues 42–349 are extracellular; the sequence is QPEQKTLSLT…PHKHFDINEH (308 aa). TNFR-Cys repeat units lie at residues 50–88, 90–131, 133–167, and 170–211; these read LTGT…LRVC, SCPS…DREC, CPPG…EDVR, and QCAR…DNVC. 9 disulfides stabilise this stretch: cysteine 67–cysteine 80, cysteine 70–cysteine 88, cysteine 91–cysteine 106, cysteine 109–cysteine 123, cysteine 113–cysteine 131, cysteine 133–cysteine 144, cysteine 150–cysteine 168, cysteine 171–cysteine 186, and cysteine 192–cysteine 211. Asparagine 82 carries an N-linked (GlcNAc...) asparagine glycan. 2 disordered regions span residues 214-306 and 318-338; these read HLSS…GPHH and EATG…HPRQ. Residues 216 to 225 are compositionally biased toward low complexity; it reads SSSSTTPSSP. 2 stretches are compositionally biased toward polar residues: residues 241–262 and 276–302; these read VPSS…TASV and PDNT…THQQ. N-linked (GlcNAc...) asparagine glycans are attached at residues asparagine 252, asparagine 278, and asparagine 289. A helical membrane pass occupies residues 350-370; that stretch reads LPWMIVLFLLLVLVLIVVCSI. Cysteine 368 carries the S-palmitoyl cysteine lipid modification. Topologically, residues 371–655 are cytoplasmic; sequence RKSSRTLKKG…SVYSHLPDLL (285 aa). Positions 415–498 constitute a Death domain; the sequence is GIDILKLVAA…DVVEKIRGLM (84 aa).

Associates with TRADD. Interacts with NGFR. Interacts with CASP8. In terms of processing, oxidized in response to reactive oxygen species (ROS), leading to endocytosis. Detected in brain (at protein level). Detected in corpus callosum oligodendrocytes. Detected in embryonic and adult brain.

Its subcellular location is the cell membrane. Functionally, promotes apoptosis, possibly via a pathway that involves the activation of NF-kappa-B. Can also promote apoptosis mediated by BAX and by the release of cytochrome c from the mitochondria into the cytoplasm. Trophic-factor deprivation triggers the cleavage of surface APP by beta-secretase to release sAPP-beta which is further cleaved to release an N-terminal fragment of APP (N-APP). Negatively regulates oligodendrocyte survival, maturation and myelination. Plays a role in signaling cascades triggered by stimulation of T-cell receptors, in the adaptive immune response and in the regulation of T-cell differentiation and proliferation. Negatively regulates T-cell responses and the release of cytokines such as IL4, IL5, IL10, IL13 and IFNG by Th2 cells. Negatively regulates the production of IgG, IgM and IgM in response to antigens. May inhibit the activation of JNK in response to T-cell stimulation. Also acts as a regulator of pyroptosis: recruits CASP8 in response to reactive oxygen species (ROS) and subsequent oxidation, leading to activation of GSDMC. The sequence is that of Tumor necrosis factor receptor superfamily member 21 (Tnfrsf21) from Rattus norvegicus (Rat).